A 317-amino-acid chain; its full sequence is 8-oxo-(d)GTP phosphatase (317 aa).

Residues 15 to 148 (RIVYAAGAVL…DRKVLCRFAK (134 aa)) enclose the Nudix hydrolase domain. Residues 43–46 (RPRY), aspartate 48, and 53–55 (KGK) each bind substrate. Lysine 53, glutamate 69, and glutamate 73 together coordinate Mg(2+). The Nudix box motif lies at 54-75 (GKVDPGETAPVGAVREILEETG). The substrate site is built by tyrosine 89, lysine 99, glutamate 118, and tyrosine 136. Residue glutamate 118 participates in Mg(2+) binding.

The protein belongs to the Nudix hydrolase family. Mg(2+) serves as cofactor.

The catalysed reaction is 8-oxo-dGTP + H2O = 8-oxo-dGDP + phosphate + H(+). The enzyme catalyses 8-oxo-GTP + H2O = 8-oxo-GDP + phosphate + H(+). Functionally, catalyzes the conversion of 8-oxo-dGTP to 8-oxo-dGDP, and 8-oxo-GTP to 8-oxo-GDP. The polypeptide is 8-oxo-(d)GTP phosphatase (Mycobacterium tuberculosis (strain CDC 1551 / Oshkosh)).